The following is a 301-amino-acid chain: Ornithine carbamoyltransferase (301 aa).

Carbamoyl phosphate is bound by residues arginine 100 and 127–130 (HPCQ). Residues asparagine 158, aspartate 221, and 225–226 (SM) each bind L-ornithine. Positions 260 and 288 each coordinate carbamoyl phosphate.

The protein belongs to the aspartate/ornithine carbamoyltransferase superfamily. OTCase family.

The protein localises to the cytoplasm. The catalysed reaction is carbamoyl phosphate + L-ornithine = L-citrulline + phosphate + H(+). The protein operates within amino-acid biosynthesis; L-arginine biosynthesis; L-arginine from L-ornithine and carbamoyl phosphate: step 1/3. In terms of biological role, reversibly catalyzes the transfer of the carbamoyl group from carbamoyl phosphate (CP) to the N(epsilon) atom of ornithine (ORN) to produce L-citrulline. This is Ornithine carbamoyltransferase (argF) from Vibrio sp. (strain 2693).